The chain runs to 297 residues: GTPase Era (297 aa).

Residues Arg7–Ala174 form the Era-type G domain. Residues Gly15 to Ser22 are G1. Gly15–Ser22 contacts GTP. The tract at residues Gln41–Asn45 is G2. The G3 stretch occupies residues Asp62–Gly65. GTP is bound by residues Asp62 to Ile66 and Asn124 to Asp127. The segment at Asn124 to Asp127 is G4. Positions Val153 to Ala155 are G5. The KH type-2 domain occupies Thr205–Lys282.

Belongs to the TRAFAC class TrmE-Era-EngA-EngB-Septin-like GTPase superfamily. Era GTPase family. As to quaternary structure, monomer.

Its subcellular location is the cytoplasm. The protein localises to the cell inner membrane. Its function is as follows. An essential GTPase that binds both GDP and GTP, with rapid nucleotide exchange. Plays a role in 16S rRNA processing and 30S ribosomal subunit biogenesis and possibly also in cell cycle regulation and energy metabolism. In Geotalea uraniireducens (strain Rf4) (Geobacter uraniireducens), this protein is GTPase Era.